The primary structure comprises 468 residues: Dimethylamine methyltransferase MtbB2 (468 aa).

Position 356 (Pyl356) is a non-standard amino acid, pyrrolysine.

Belongs to the dimethylamine methyltransferase family.

It catalyses the reaction Co(I)-[dimethylamine-specific corrinoid protein] + dimethylamine + H(+) = methyl-Co(III)-[dimethylamine-specific corrinoid protein] + methylamine. It functions in the pathway one-carbon metabolism; methanogenesis from dimethylamine. In terms of biological role, catalyzes the transfer of a methyl group from dimethylamine to the corrinoid cofactor of MtbC. The chain is Dimethylamine methyltransferase MtbB2 (mtbB2) from Methanosarcina acetivorans (strain ATCC 35395 / DSM 2834 / JCM 12185 / C2A).